The chain runs to 265 residues: uncharacterized protein (265 aa).

This is an uncharacterized protein from Autographa californica nuclear polyhedrosis virus (AcMNPV).